Here is a 356-residue protein sequence, read N- to C-terminus: Cyanide hydratase (356 aa).

Positions 15-290 (FKVAAVQAEP…EVVLYANISL (276 aa)) constitute a CN hydrolase domain. The active-site Proton acceptor is the Glu-55. Residue Lys-137 is part of the active site. Cys-172 serves as the catalytic Nucleophile. The interval 331–356 (DEQAASKAQQAEIDNAGKGSIVPSKL) is disordered.

The protein belongs to the carbon-nitrogen hydrolase superfamily. Nitrilase family.

It catalyses the reaction formamide = hydrogen cyanide + H2O. Its function is as follows. Catalyzes the hydration of cyanide to formamide. Degradation of cyanide may be important for plant pathogenic fungi in infection of cyanogenic plants. The protein is Cyanide hydratase of Armillaria gallica (Bulbous honey fungus).